Consider the following 1190-residue polypeptide: Phosphatidylinositol 3,4,5-trisphosphate 5-phosphatase 1 (1190 aa).

Residues 8–104 (WNHGNITRSK…GLVTHLQFPV (97 aa)) form the SH2 domain. The segment covering 111 to 120 (AIDEPEEDTE) has biased composition (acidic residues). Residues 111 to 130 (AIDEPEEDTESVMSPPELPP) are disordered. An SH3-binding 1 motif is present at residues 126 to 131 (PELPPR). Ser-245 carries the post-translational modification Phosphoserine. Positions 914-917 (NPNY) match the NPXY motif 1 motif. Tyr-917 is subject to Phosphotyrosine. Ser-934 is modified (phosphoserine). At Tyr-944 the chain carries Phosphotyrosine. A disordered region spans residues 946 to 1190 (QLPKDSSLGP…ESLLGRTAMQ (245 aa)). Pro residues predominate over residues 961 to 971 (PPTPPSQPPLS). Position 963 is a phosphothreonine (Thr-963). 2 positions are modified to phosphoserine: Ser-966 and Ser-971. The SH3-binding 2 motif lies at 969 to 974 (PLSPKK). The span at 989–998 (QETRPGDLGK) shows a compositional bias: basic and acidic residues. The segment at 1014–1028 (MFENPLYGSVSPFPK) is interaction with DAB2. The short motif at 1017-1020 (NPLY) is the NPXY motif 2 element. The residue at position 1020 (Tyr-1020) is a Phosphotyrosine. A compositionally biased stretch (basic and acidic residues) spans 1031–1045 (PRKEQESPKMMRKEP). An SH3-binding 3 motif is present at residues 1038-1049 (PKMMRKEPPPCP). Over residues 1140–1149 (IPAPRPPLPV) the composition is skewed to pro residues. The segment covering 1161–1183 (KGRDYRDNTELPHHGKHRQEESL) has biased composition (basic and acidic residues).

This sequence belongs to the inositol 1,4,5-trisphosphate 5-phosphatase family. As to quaternary structure, interacts with tyrosine phosphorylated forms of SHC1. Interacts with tyrosine phosphorylated form of DOK1. Interacts with tyrosine phosphorylated form of DOK3. Interacts with tyrosine phosphorylated form of SLAMF1/CD150. Interacts with PTPN11/SHP-2 in response to IL-3. Interacts with receptor EPOR. Interacts with receptors MS4A2/FCER1B and FCER1G. Interacts with receptors FCGR2B and FCGR3. Interacts with receptor FCGR2A, leading to regulate gene expression during the phagocytic process. Interacts with GRB2. Interacts with PLCG1. Interacts with tyrosine kinases SRC and TEC. Interacts with c-Met/MET. Interacts with MILR1 (tyrosine-phosphorylated). Can weakly interact (via NPXY motif 2) with DAB2 (via PID domain); the interaction is impaired by tyrosine phosphorylation of the NPXY motif. Interacts (via SH2 domain) with tyrosine phosphorylated KLRC1 (via ITIM). Interacts with MPL/TPOR. Post-translationally, tyrosine phosphorylated by the members of the SRC family after exposure to a diverse array of extracellular stimuli such as cytokines, growth factors, antibodies, chemokines, integrin ligands and hypertonic and oxidative stress. Phosphorylated upon IgG receptor FCGR2B-binding.

The protein localises to the cytoplasm. It localises to the cell membrane. Its subcellular location is the membrane raft. It is found in the cytoskeleton. The catalysed reaction is a 1,2-diacyl-sn-glycero-3-phospho-(1D-myo-inositol-3,4,5-trisphosphate) + H2O = a 1,2-diacyl-sn-glycero-3-phospho-(1D-myo-inositol-3,4-bisphosphate) + phosphate. It carries out the reaction 1D-myo-inositol 1,3,4,5-tetrakisphosphate + H2O = 1D-myo-inositol 1,3,4-trisphosphate + phosphate. It catalyses the reaction a 1,2-diacyl-sn-glycero-3-phospho-(1D-myo-inositol-4,5-bisphosphate) + H2O = a 1,2-diacyl-sn-glycero-3-phospho-(1D-myo-inositol 4-phosphate) + phosphate. With respect to regulation, activated upon translocation to the sites of synthesis of PtdIns(3,4,5)P3 in the membrane. Functionally, phosphatidylinositol (PtdIns) phosphatase that specifically hydrolyzes the 5-phosphate of phosphatidylinositol-3,4,5-trisphosphate (PtdIns(3,4,5)P3) to produce PtdIns(3,4)P2, thereby negatively regulating the PI3K (phosphoinositide 3-kinase) pathways. Also able to hydrolyze the 5-phosphate of phosphatidylinositol-4,5-bisphosphate (PtdIns(4,5)P3) and inositol 1,3,4,5-tetrakisphosphate. Acts as a negative regulator of B-cell antigen receptor signaling. Mediates signaling from the FC-gamma-RIIB receptor (FCGR2B), playing a central role in terminating signal transduction from activating immune/hematopoietic cell receptor systems. Acts as a negative regulator of myeloid cell proliferation/survival and chemotaxis, mast cell degranulation, immune cells homeostasis, integrin alpha-IIb/beta-3 signaling in platelets and JNK signaling in B-cells. Regulates proliferation of osteoclast precursors, macrophage programming, phagocytosis and activation and is required for endotoxin tolerance. Involved in the control of cell-cell junctions, CD32a signaling in neutrophils and modulation of EGF-induced phospholipase C activity. Key regulator of neutrophil migration, by governing the formation of the leading edge and polarization required for chemotaxis. Modulates FCGR3/CD16-mediated cytotoxicity in NK cells. Mediates the activin/TGF-beta-induced apoptosis through its Smad-dependent expression. This chain is Phosphatidylinositol 3,4,5-trisphosphate 5-phosphatase 1 (Inpp5d), found in Rattus norvegicus (Rat).